Here is a 338-residue protein sequence, read N- to C-terminus: Probable O-antigen biosynthesis glycosyltransferase WbiN (338 aa).

The protein belongs to the glycosyltransferase group 1 family. Glycosyltransferase 4 subfamily.

The catalysed reaction is N-acetyl-alpha-D-galactosaminyl-di-trans,octa-cis-undecaprenyl diphosphate + UDP-N-acetyl-alpha-D-galactosamine = alpha-D-GalNAc-(1-&gt;3)-alpha-D-GalNAc-di-trans,octa-cis-undecaprenyl diphosphate + UDP + H(+). The protein operates within bacterial outer membrane biogenesis; LPS O-antigen biosynthesis. Functionally, involved in the assembly of the O-repeating unit during O-antigen biosynthesis. In Escherichia coli, this protein is Probable O-antigen biosynthesis glycosyltransferase WbiN.